The primary structure comprises 134 residues: Large ribosomal subunit protein bL20 (134 aa).

This sequence belongs to the bacterial ribosomal protein bL20 family.

Its function is as follows. Binds directly to 23S ribosomal RNA and is necessary for the in vitro assembly process of the 50S ribosomal subunit. It is not involved in the protein synthesizing functions of that subunit. This Brucella abortus (strain S19) protein is Large ribosomal subunit protein bL20.